We begin with the raw amino-acid sequence, 174 residues long: Small ribosomal subunit protein uS5 (174 aa).

The S5 DRBM domain occupies 17–80; it reads WQERVVQIRR…ADGKKHLIDV (64 aa).

Belongs to the universal ribosomal protein uS5 family. In terms of assembly, part of the 30S ribosomal subunit. Contacts proteins S4 and S8.

Functionally, with S4 and S12 plays an important role in translational accuracy. Located at the back of the 30S subunit body where it stabilizes the conformation of the head with respect to the body. In Thermosynechococcus vestitus (strain NIES-2133 / IAM M-273 / BP-1), this protein is Small ribosomal subunit protein uS5.